Consider the following 211-residue polypeptide: Ribosomal RNA small subunit methyltransferase G (211 aa).

Residues Gly-76, Leu-81, Val-127–Glu-128, and Arg-142 each bind S-adenosyl-L-methionine.

The protein belongs to the methyltransferase superfamily. RNA methyltransferase RsmG family.

The protein localises to the cytoplasm. The catalysed reaction is guanosine(527) in 16S rRNA + S-adenosyl-L-methionine = N(7)-methylguanosine(527) in 16S rRNA + S-adenosyl-L-homocysteine. Its function is as follows. Specifically methylates the N7 position of guanine in position 527 of 16S rRNA. This Vibrio campbellii (strain ATCC BAA-1116) protein is Ribosomal RNA small subunit methyltransferase G.